Consider the following 277-residue polypeptide: Caspase-3 (277 aa).

Met-1 bears the N-acetylmethionine mark. 2 propeptides span residues 1 to 9 (MDNNETSVD) and 10 to 28 (SKSI…KSMD). Lys-11 carries the post-translational modification N6-acetyllysine. Ser-26 carries the post-translational modification Phosphoserine. Residues His-121 and Cys-163 contribute to the active site. An S-nitrosocysteine; in inhibited form modification is found at Cys-163.

It belongs to the peptidase C14A family. As to quaternary structure, heterotetramer that consists of two anti-parallel arranged heterodimers, each one formed by a 17 kDa (p17) and a 12 kDa (p12) subunit. Interacts with BIRC6/bruce. Post-translationally, cleavage by granzyme B, caspase-6, caspase-8 and caspase-10 generates the two active subunits. Additional processing of the propeptides is likely due to the autocatalytic activity of the activated protease. Active heterodimers between the small subunit of caspase-7 protease and the large subunit of caspase-3 also occur and vice versa. In terms of processing, S-nitrosylated on its catalytic site cysteine in unstimulated cell lines and denitrosylated upon activation of the Fas apoptotic pathway, associated with an increase in intracellular caspase activity. Fas therefore activates caspase-3 not only by inducing the cleavage of the caspase zymogen to its active subunits, but also by stimulating the denitrosylation of its active site thiol. Ubiquitinated by BIRC6; this activity is inhibited by DIABLO/SMAC. As to expression, expressed in heart, brain, liver, and muscle but not in kidney or testis.

The protein localises to the cytoplasm. It catalyses the reaction Strict requirement for an Asp residue at positions P1 and P4. It has a preferred cleavage sequence of Asp-Xaa-Xaa-Asp-|- with a hydrophobic amino-acid residue at P2 and a hydrophilic amino-acid residue at P3, although Val or Ala are also accepted at this position.. Its activity is regulated as follows. Inhibited by BIRC6; following inhibition of BIRC6-caspase binding by DIABLO/SMAC, BIRC6 is subjected to caspase cleavage, leading to an increase in active caspases. Its function is as follows. Involved in the activation cascade of caspases responsible for apoptosis execution. At the onset of apoptosis, it proteolytically cleaves poly(ADP-ribose) polymerase PARP1 at a '216-Asp-|-Gly-217' bond. Cleaves and activates sterol regulatory element binding proteins (SREBPs) between the basic helix-loop-helix leucine zipper domain and the membrane attachment domain. Cleaves and activates caspase-6, -7 and -9 (CASP6, CASP7 and CASP9, respectively). Cleaves and inactivates interleukin-18 (IL18). Triggers cell adhesion in sympathetic neurons through RET cleavage. Cleaves IL-1 beta between an Asp and an Ala, releasing the mature cytokine which is involved in a variety of inflammatory processes. Cleaves and inhibits serine/threonine-protein kinase AKT1 in response to oxidative stress. Acts as an inhibitor of type I interferon production during virus-induced apoptosis by mediating cleavage of antiviral proteins CGAS, IRF3 and MAVS, thereby preventing cytokine overproduction. Also involved in pyroptosis by mediating cleavage and activation of gasdermin-E (GSDME). Cleaves XRCC4 and phospholipid scramblase proteins XKR4, XKR8 and XKR9, leading to promote phosphatidylserine exposure on apoptotic cell surface. Cleaves BIRC6 following inhibition of BIRC6-caspase binding by DIABLO/SMAC. This chain is Caspase-3 (Casp3), found in Rattus norvegicus (Rat).